Reading from the N-terminus, the 277-residue chain is 5'-nucleotidase SurE (277 aa).

The a divalent metal cation site is built by D14, D15, S46, and N104.

Belongs to the SurE nucleotidase family. A divalent metal cation is required as a cofactor.

The protein localises to the cytoplasm. The enzyme catalyses a ribonucleoside 5'-phosphate + H2O = a ribonucleoside + phosphate. Nucleotidase that shows phosphatase activity on nucleoside 5'-monophosphates. The chain is 5'-nucleotidase SurE from Picosynechococcus sp. (strain ATCC 27264 / PCC 7002 / PR-6) (Agmenellum quadruplicatum).